The chain runs to 531 residues: Peroxinectin A (531 aa).

An N-terminal signal peptide occupies residues 1–21; that stretch reads MRLNLISFFIIFTILVSISNS. Asparagine 62 carries N-linked (GlcNAc...) asparagine glycosylation. Histidine 101 acts as the Proton acceptor in catalysis. N-linked (GlcNAc...) asparagine glycans are attached at residues asparagine 131 and asparagine 338.

Belongs to the peroxidase family.

The protein localises to the secreted. It carries out the reaction 2 a phenolic donor + H2O2 = 2 a phenolic radical donor + 2 H2O. In Dictyostelium discoideum (Social amoeba), this protein is Peroxinectin A (poxA).